The chain runs to 304 residues: Dermonecrotic toxin LlSicTox-betaIA1 (304 aa).

The first 21 residues, 1–21 (MLLSAVISFIGFAAFLQEANG), serve as a signal peptide directing secretion. Positions 22 to 26 (HVVER) are excised as a propeptide. His38 is an active-site residue. 2 residues coordinate Mg(2+): Glu58 and Asp60. His74 (nucleophile) is an active-site residue. Intrachain disulfides connect Cys78-Cys84 and Cys80-Cys223. Asp118 is a Mg(2+) binding site.

Belongs to the arthropod phospholipase D family. Class II subfamily. Class IIb sub-subfamily. It depends on Mg(2+) as a cofactor. In terms of tissue distribution, expressed by the venom gland.

It is found in the secreted. The catalysed reaction is an N-(acyl)-sphingosylphosphocholine = an N-(acyl)-sphingosyl-1,3-cyclic phosphate + choline. It catalyses the reaction an N-(acyl)-sphingosylphosphoethanolamine = an N-(acyl)-sphingosyl-1,3-cyclic phosphate + ethanolamine. It carries out the reaction a 1-acyl-sn-glycero-3-phosphocholine = a 1-acyl-sn-glycero-2,3-cyclic phosphate + choline. The enzyme catalyses a 1-acyl-sn-glycero-3-phosphoethanolamine = a 1-acyl-sn-glycero-2,3-cyclic phosphate + ethanolamine. In terms of biological role, dermonecrotic toxins cleave the phosphodiester linkage between the phosphate and headgroup of certain phospholipids (sphingolipid and lysolipid substrates), forming an alcohol (often choline) and a cyclic phosphate. This toxin acts on sphingomyelin (SM) with low activity. It may also act on ceramide phosphoethanolamine (CPE), lysophosphatidylcholine (LPC) and lysophosphatidylethanolamine (LPE), but not on lysophosphatidylserine (LPS), and lysophosphatidylglycerol (LPG). It acts by transphosphatidylation, releasing exclusively cyclic phosphate products as second products. Induces hemolysis, dermonecrosis, and edema. Also induces platelet aggregation. This Loxosceles laeta (South American recluse spider) protein is Dermonecrotic toxin LlSicTox-betaIA1.